The chain runs to 809 residues: Ubiquitin carboxyl-terminal hydrolase 1 (809 aa).

The region spanning 101–738 (AGLVNDGNTC…GVFMLFYEYD (638 aa)) is the USP domain. Cys-110 serves as the catalytic Nucleophile. The segment at 143–195 (NEHNEEGNGQESAQDEATHKKNTRKGGKVYGKHKKKLNRKSSSKEDEEKSQEP) is disordered. Over residues 162 to 183 (KKNTRKGGKVYGKHKKKLNRKS) the composition is skewed to basic residues. Basic and acidic residues predominate over residues 184-194 (SSKEDEEKSQE). 3 positions are modified to phosphoserine: Ser-530, Ser-531, and Ser-555. The disordered stretch occupies residues 569 to 596 (ASHYNHTKDISNYDPLNGEVDGVTSDDE). Phosphoserine occurs at positions 618 and 638. Thr-652 carries the phosphothreonine modification. Ser-653, Ser-654, and Ser-670 each carry phosphoserine. His-697 functions as the Proton acceptor in the catalytic mechanism. The segment at 750–809 (LEAIQSNNEEDDEKEQEQKGVQEPKESQEQGEGEEQEEGQEQMKFERTEDHRDISGKDVN) is disordered. Ser-755 is subject to Phosphoserine. Positions 765–777 (QEQKGVQEPKESQ) are enriched in basic and acidic residues. Over residues 778–789 (EQGEGEEQEEGQ) the composition is skewed to acidic residues. Basic and acidic residues predominate over residues 790-809 (EQMKFERTEDHRDISGKDVN).

It belongs to the peptidase C19 family.

The catalysed reaction is Thiol-dependent hydrolysis of ester, thioester, amide, peptide and isopeptide bonds formed by the C-terminal Gly of ubiquitin (a 76-residue protein attached to proteins as an intracellular targeting signal).. Its function is as follows. Has an ATP-independent isopeptidase activity, cleaving at the C-terminus of the ubiquitin moiety in natural or engineered linear fusion proteins, irrespective of their size or the presence of an N-terminal extension to ubiquitin. This chain is Ubiquitin carboxyl-terminal hydrolase 1 (UBP1), found in Saccharomyces cerevisiae (strain ATCC 204508 / S288c) (Baker's yeast).